A 363-amino-acid chain; its full sequence is Phospho-N-acetylmuramoyl-pentapeptide-transferase (363 aa).

A run of 11 helical transmembrane segments spans residues 4–24 (NLLVSHINSCYIFSIFYNVIV), 28–48 (IAILLSFSISFSLIPILIKYF), 72–92 (TPTMGGIAIIFSIIISTLMLA), 96–116 (NIYVLTTIFGMLSLAILGLID), 129–149 (INATCKLISQIMVSIICCMIV), 169–189 (LTIDLSIFYIPFALFIIIGSS), 200–220 (GLVTVPIIIVSFCLGLMCYLA), 241–261 (ELTVLCSAIIGASLGFLWYNI), 266–286 (IFMGDVGSLSLGGAIGIISVI), 294–314 (GIIGGLFVIEALSAIIQIYSI), and 342–362 (IVSRFWLLSIIFSLIGLSSLI).

This sequence belongs to the glycosyltransferase 4 family. MraY subfamily. Requires Mg(2+) as cofactor.

It is found in the cell inner membrane. The enzyme catalyses UDP-N-acetyl-alpha-D-muramoyl-L-alanyl-gamma-D-glutamyl-meso-2,6-diaminopimeloyl-D-alanyl-D-alanine + di-trans,octa-cis-undecaprenyl phosphate = di-trans,octa-cis-undecaprenyl diphospho-N-acetyl-alpha-D-muramoyl-L-alanyl-D-glutamyl-meso-2,6-diaminopimeloyl-D-alanyl-D-alanine + UMP. It functions in the pathway cell wall biogenesis; peptidoglycan biosynthesis. In terms of biological role, catalyzes the initial step of the lipid cycle reactions in the biosynthesis of the cell wall peptidoglycan: transfers peptidoglycan precursor phospho-MurNAc-pentapeptide from UDP-MurNAc-pentapeptide onto the lipid carrier undecaprenyl phosphate, yielding undecaprenyl-pyrophosphoryl-MurNAc-pentapeptide, known as lipid I. This chain is Phospho-N-acetylmuramoyl-pentapeptide-transferase, found in Orientia tsutsugamushi (strain Ikeda) (Rickettsia tsutsugamushi).